Reading from the N-terminus, the 185-residue chain is Ribosome-recycling factor (185 aa).

It belongs to the RRF family.

The protein resides in the cytoplasm. Functionally, responsible for the release of ribosomes from messenger RNA at the termination of protein biosynthesis. May increase the efficiency of translation by recycling ribosomes from one round of translation to another. This Coxiella burnetii (strain CbuK_Q154) (Coxiella burnetii (strain Q154)) protein is Ribosome-recycling factor.